Here is a 123-residue protein sequence, read N- to C-terminus: Immunoglobulin heavy variable 4-34 (123 aa).

Residues 1–26 (MDLLHKNMKHLWFFLLLVAAPRWVLS) form the signal peptide. Residues 26-123 (SQVQLQQWGA…ADTAVYYCAR (98 aa)) form a v region region. The segment at 27-51 (QVQLQQWGAGLLKPSETLSLTCAVY) is framework-1. The Ig-like domain occupies 27–123 (QVQLQQWGAG…ADTAVYYCAR (97 aa)). Cys48 and Cys121 are joined by a disulfide. The complementarity-determining-1 stretch occupies residues 52 to 59 (GGSFSGYY). The tract at residues 60 to 76 (WSWIRQPPGKGLEWIGE) is framework-2. Positions 77–83 (INHSGST) are complementarity-determining-2. Asn78 is a glycosylation site (N-linked (GlcNAc...) asparagine). The framework-3 stretch occupies residues 84-121 (NYNPSLKSRVTISVDTSKNQFSLKLSSVTAADTAVYYC). Residues 122–123 (AR) form a complementarity-determining-3 region.

As to quaternary structure, immunoglobulins are composed of two identical heavy chains and two identical light chains; disulfide-linked.

The protein resides in the secreted. Its subcellular location is the cell membrane. V region of the variable domain of immunoglobulin heavy chains that participates in the antigen recognition. Immunoglobulins, also known as antibodies, are membrane-bound or secreted glycoproteins produced by B lymphocytes. In the recognition phase of humoral immunity, the membrane-bound immunoglobulins serve as receptors which, upon binding of a specific antigen, trigger the clonal expansion and differentiation of B lymphocytes into immunoglobulins-secreting plasma cells. Secreted immunoglobulins mediate the effector phase of humoral immunity, which results in the elimination of bound antigens. The antigen binding site is formed by the variable domain of one heavy chain, together with that of its associated light chain. Thus, each immunoglobulin has two antigen binding sites with remarkable affinity for a particular antigen. The variable domains are assembled by a process called V-(D)-J rearrangement and can then be subjected to somatic hypermutations which, after exposure to antigen and selection, allow affinity maturation for a particular antigen. In Homo sapiens (Human), this protein is Immunoglobulin heavy variable 4-34.